We begin with the raw amino-acid sequence, 169 residues long: Putative phosphoesterase SERP0604 (169 aa).

The active-site Proton donor is the histidine 34. 2 short sequence motifs (HXTX) span residues 34–37 (HITI) and 115–118 (HFTI). Histidine 115 acts as the Proton acceptor in catalysis.

The protein belongs to the 2H phosphoesterase superfamily. YjcG family.

This is Putative phosphoesterase SERP0604 from Staphylococcus epidermidis (strain ATCC 35984 / DSM 28319 / BCRC 17069 / CCUG 31568 / BM 3577 / RP62A).